The chain runs to 827 residues: Periplasmic nitrate reductase (827 aa).

The segment at residues Met-1–Ala-34 is a signal peptide (tat-type signal). In terms of domain architecture, 4Fe-4S Mo/W bis-MGD-type spans Ile-36 to Asp-92. [4Fe-4S] cluster-binding residues include Cys-43, Cys-46, Cys-50, and Cys-78. Mo-bis(molybdopterin guanine dinucleotide) contacts are provided by residues Lys-80, Gln-148, Asn-173, Cys-177, Trp-210–Met-217, Ser-241–His-245, Gln-260–Asp-262, Met-371, Gln-375, Asn-481, Ser-507–Asp-508, Lys-530, Asp-557, and Thr-717–Ser-726. Residue Phe-793 participates in substrate binding. Mo-bis(molybdopterin guanine dinucleotide)-binding residues include Asn-801 and Lys-818.

It belongs to the prokaryotic molybdopterin-containing oxidoreductase family. NasA/NapA/NarB subfamily. As to quaternary structure, component of the periplasmic nitrate reductase NapAB complex composed of NapA and NapB. It depends on [4Fe-4S] cluster as a cofactor. Mo-bis(molybdopterin guanine dinucleotide) is required as a cofactor. Post-translationally, predicted to be exported by the Tat system. The position of the signal peptide cleavage has not been experimentally proven.

It localises to the periplasm. It carries out the reaction 2 Fe(II)-[cytochrome] + nitrate + 2 H(+) = 2 Fe(III)-[cytochrome] + nitrite + H2O. Its function is as follows. Catalytic subunit of the periplasmic nitrate reductase complex NapAB. Receives electrons from NapB and catalyzes the reduction of nitrate to nitrite. In Paramagnetospirillum magnetotacticum (Aquaspirillum magnetotacticum), this protein is Periplasmic nitrate reductase.